A 232-amino-acid chain; its full sequence is Phosphatidylserine decarboxylase proenzyme (232 aa).

Catalysis depends on Ser-190, which acts as the Schiff-base intermediate with substrate; via pyruvic acid. Ser-190 carries the pyruvic acid (Ser); by autocatalysis modification.

The protein belongs to the phosphatidylserine decarboxylase family. PSD-A subfamily. Heterodimer of a large membrane-associated beta subunit and a small pyruvoyl-containing alpha subunit. Pyruvate is required as a cofactor. Post-translationally, is synthesized initially as an inactive proenzyme. Formation of the active enzyme involves a self-maturation process in which the active site pyruvoyl group is generated from an internal serine residue via an autocatalytic post-translational modification. Two non-identical subunits are generated from the proenzyme in this reaction, and the pyruvate is formed at the N-terminus of the alpha chain, which is derived from the carboxyl end of the proenzyme. The post-translation cleavage follows an unusual pathway, termed non-hydrolytic serinolysis, in which the side chain hydroxyl group of the serine supplies its oxygen atom to form the C-terminus of the beta chain, while the remainder of the serine residue undergoes an oxidative deamination to produce ammonia and the pyruvoyl prosthetic group on the alpha chain.

It localises to the cell membrane. The enzyme catalyses a 1,2-diacyl-sn-glycero-3-phospho-L-serine + H(+) = a 1,2-diacyl-sn-glycero-3-phosphoethanolamine + CO2. It participates in phospholipid metabolism; phosphatidylethanolamine biosynthesis; phosphatidylethanolamine from CDP-diacylglycerol: step 2/2. Catalyzes the formation of phosphatidylethanolamine (PtdEtn) from phosphatidylserine (PtdSer). The protein is Phosphatidylserine decarboxylase proenzyme of Sinorhizobium medicae (strain WSM419) (Ensifer medicae).